The primary structure comprises 277 residues: Glutamate racemase (277 aa).

Substrate-binding positions include 25 to 26 (DS) and 57 to 58 (YG). Cysteine 89 acts as the Proton donor/acceptor in catalysis. Residue 90-91 (NT) participates in substrate binding. Residue cysteine 204 is the Proton donor/acceptor of the active site. 205 to 206 (TH) serves as a coordination point for substrate.

This sequence belongs to the aspartate/glutamate racemases family.

It catalyses the reaction L-glutamate = D-glutamate. It participates in cell wall biogenesis; peptidoglycan biosynthesis. Functionally, provides the (R)-glutamate required for cell wall biosynthesis. The chain is Glutamate racemase from Brucella abortus (strain 2308).